Consider the following 492-residue polypeptide: GTPase-GDP dissociation stimulator arz1 (492 aa).

Its subcellular location is the cytoplasm. The protein resides in the nucleus. Its function is as follows. Probably acts as a GEF (guanine nucleotide exchange factor) for the Rho family of small GTP-binding proteins (G proteins) that stimulates the dissociation of GDP to enable subsequent binding of GTP. May also chaperone the processing and/or trafficking of small GTPases independently of GEF activity. May be involved in the control of polarized cell growth via CDC42-mediated signaling. May also be involved in the control of cell-wall organization via RHO1-mediated signaling. This is GTPase-GDP dissociation stimulator arz1 from Schizosaccharomyces pombe (strain 972 / ATCC 24843) (Fission yeast).